Consider the following 776-residue polypeptide: Meiotic expression up-regulated protein 1/2 (776 aa).

5 coiled-coil regions span residues 87-122 (YVLKVAEEKIEKLLKENGTLKNEEKCLRMQIVAQEE), 173-227 (FSEL…DLKE), 265-307 (YKVE…NDEE), 362-430 (KMSQ…RNNS), and 496-595 (INNQ…NTEL).

This Schizosaccharomyces pombe (strain 972 / ATCC 24843) (Fission yeast) protein is Meiotic expression up-regulated protein 1/2 (meu1).